Consider the following 360-residue polypeptide: Phospho-N-acetylmuramoyl-pentapeptide-transferase (360 aa).

The Periplasmic portion of the chain corresponds to 1-25 (MLVWLAEHLVKYYSGFNVFSYLTFR). The chain crosses the membrane as a helical span at residues 26-46 (AIVSLLTALFISLWMGPRMIA). Topologically, residues 47–71 (RLQKLSFGQVVRNDGPESHFSKRGT) are cytoplasmic. The chain crosses the membrane as a helical span at residues 72–92 (PTMGGIMILTAIVISVLLWAY). Position 93 (proline 93) is a topological domain, periplasmic. A helical transmembrane segment spans residues 94–114 (SNPYVWCVLVVLIGYGIIGFV). Residues 115–131 (DDYHKVVRKDTKGLIAR) lie on the Cytoplasmic side of the membrane. Residues 132–152 (WKYFWMSVIALGVAFALYLVG) traverse the membrane as a helical segment. Residues 153–167 (KDTPATQLVVPFFKD) are Periplasmic-facing. A helical membrane pass occupies residues 168 to 188 (VMPQLGLFYILLSYFVIVGTG). Topologically, residues 189–198 (NAVNLTDGLD) are cytoplasmic. Residues 199–219 (GLAIMPTVFVAAGFALVAWAT) traverse the membrane as a helical segment. At 220-235 (GNMNFANYLHIPYLRY) the chain is on the periplasmic side. A helical membrane pass occupies residues 236 to 256 (AGELVIVCTAIVGAGLGFLWF). Topologically, residues 257-262 (NTYPAQ) are cytoplasmic. Residues 263 to 283 (VFMGDVGSLALGGALGIIAVL) traverse the membrane as a helical segment. The Periplasmic portion of the chain corresponds to 284-287 (LRQE). A helical membrane pass occupies residues 288-308 (FLLVIMGGVFVVETLSVILQV). Residues 309 to 337 (GSFKLRGQRIFRMAPIHHHYELKGWPEPR) are Cytoplasmic-facing. Residues 338–358 (VIVRFWIISLMLVLIGLATLK) form a helical membrane-spanning segment. Topologically, residues 359 to 360 (VR) are periplasmic.

It belongs to the glycosyltransferase 4 family. MraY subfamily. The cofactor is Mg(2+).

Its subcellular location is the cell inner membrane. The enzyme catalyses UDP-N-acetyl-alpha-D-muramoyl-L-alanyl-gamma-D-glutamyl-meso-2,6-diaminopimeloyl-D-alanyl-D-alanine + di-trans,octa-cis-undecaprenyl phosphate = di-trans,octa-cis-undecaprenyl diphospho-N-acetyl-alpha-D-muramoyl-L-alanyl-D-glutamyl-meso-2,6-diaminopimeloyl-D-alanyl-D-alanine + UMP. It participates in cell wall biogenesis; peptidoglycan biosynthesis. Functionally, catalyzes the initial step of the lipid cycle reactions in the biosynthesis of the cell wall peptidoglycan: transfers peptidoglycan precursor phospho-MurNAc-pentapeptide from UDP-MurNAc-pentapeptide onto the lipid carrier undecaprenyl phosphate, yielding undecaprenyl-pyrophosphoryl-MurNAc-pentapeptide, known as lipid I. This is Phospho-N-acetylmuramoyl-pentapeptide-transferase from Salmonella paratyphi A (strain ATCC 9150 / SARB42).